Consider the following 498-residue polypeptide: Calcitonin receptor (498 aa).

A signal peptide spans 1–29; the sequence is MRFTLTRWCLTLFIFLNRPLPVLPDSADG. The Extracellular portion of the chain corresponds to 30-147; the sequence is AHTPTLEPEP…FTPDKLQNAY (118 aa). Intrachain disulfides connect Cys-56/Cys-82, Cys-73/Cys-113, and Cys-96/Cys-135. Asn-74, Asn-126, and Asn-131 each carry an N-linked (GlcNAc...) asparagine glycan. A helical transmembrane segment spans residues 148-170; it reads ILYYLAIVGHSLSILTLLISLGI. The Cytoplasmic portion of the chain corresponds to 171–198; sequence FMFLRYFNLLAPFNALLYPTRSISCQRV. Residues 199–219 traverse the membrane as a helical segment; it reads TLHKNMFLTYVLNSIIIIVHL. The Extracellular portion of the chain corresponds to 220 to 236; sequence VVIVPNGELVKRDPPIC. A disulfide bond links Cys-236 and Cys-306. Residues 237-259 form a helical membrane-spanning segment; the sequence is KVLHFFHQYMMSCNYFWMLCEGV. Over 260 to 276 the chain is Cytoplasmic; it reads YLHTLIVVSVFAEGQRL. Residues 277 to 297 traverse the membrane as a helical segment; sequence WWYHVLGWGFPLIPTTAHAIT. The Extracellular portion of the chain corresponds to 298–313; sequence RAVLFNDNCWLSVDTN. Residues 314 to 337 form a helical membrane-spanning segment; that stretch reads LLYIIHGPVMAALVVNFFFLLNIL. Residues 338-357 are Cytoplasmic-facing; that stretch reads RVLVKKLKESQEAESHMYLK. The helical transmembrane segment at 358 to 376 threads the bilayer; sequence AVRATLILVPLLGVQFVVL. Topologically, residues 377 to 384 are extracellular; sequence PWRPSTPL. The chain crosses the membrane as a helical span at residues 385–411; that stretch reads LGKIYDYVVHSLIHFQGFFVAIIYCFC. Topologically, residues 412 to 498 are cytoplasmic; it reads NHEVQGALKR…MEVLEQETSA (87 aa).

The protein belongs to the G-protein coupled receptor 2 family. Heterodimer of CALCR and RAMP1, RAMP2 or RAMP3; the receptor complexes function as AMYR1, AMYR2 and AMYR3 receptors, respectively, and respond to amylin/IAPP, calcitonin/CT and CGRP1 ligands. Interacts with GPRASP2.

The protein localises to the cell membrane. Its function is as follows. G protein-coupled receptor activated by ligand peptides amylin (IAPP), calcitonin (CT/CALCA) and calcitonin gene-related peptide type 1 (CGRP1/CALCA). CALCR interacts with receptor-activity-modifying proteins RAMP1, 2 and 3 to form receptor complexes AMYR1, 2 and 3, respectively. IAPP, CT and CGRP1 activate CALCR and AMYRs with distinct modes of receptor activation resulting in specific phenotypes. Ligand binding causes a conformation change that triggers signaling via guanine nucleotide-binding proteins (G proteins) and modulates the activity of downstream effectors. Activates cAMP-dependent pathway. This is Calcitonin receptor from Sus scrofa (Pig).